The following is a 308-amino-acid chain: Membrane protein insertase YidC 1 (308 aa).

An N-terminal signal peptide occupies residues 1–22; it reads MKSIKRFALSAMGAAMLLVLTG. A lipid anchor (N-palmitoyl cysteine) is attached at C23. C23 is lipidated: S-diacylglycerol cysteine. A run of 5 helical transmembrane segments spans residues 60 to 80, 135 to 155, 168 to 188, 211 to 225, and 230 to 252; these read FGVA…PLGI, FGGV…AIYF, YLGI…GVLY, MIYM…FSLF, and VTLY…NYIV. The tract at residues 263-308 is disordered; that stretch reads ELAKNPSKASAFSTPSGRKDVTPEQPTAITSKKKHKNRNAGKQRSR. A compositionally biased stretch (polar residues) spans 269–278; the sequence is SKASAFSTPS. Over residues 293 to 308 the composition is skewed to basic residues; that stretch reads SKKKHKNRNAGKQRSR.

It belongs to the OXA1/ALB3/YidC family. Type 2 subfamily.

Its subcellular location is the cell membrane. Functionally, required for the insertion and/or proper folding and/or complex formation of integral membrane proteins into the membrane. Involved in integration of membrane proteins that insert both dependently and independently of the Sec translocase complex, as well as at least some lipoproteins. This is Membrane protein insertase YidC 1 from Streptococcus pneumoniae (strain ATCC BAA-255 / R6).